We begin with the raw amino-acid sequence, 279 residues long: MTKADTIFKENIRRILKEGVFSENARPRYKDGNVANSKYITGSFAEYDLSKGEFPITTLRPIAIKSAIKEVLWIYQDQSNSLELLNDKYNVHYWNDWEVGDTGTIGQRYGAIVKKHDIINKILQQLAANPWNRRNIISLWDYEAFEETEGLLPCAFQTMFDVRRVDEDIYLDATLTQRSNDMLVAHHINAMQYVALQMMIAKHFGWKVGKFFYFINNLHIYDNQFEQAEELLRREPSDCQPRLVLNVPDGTNFFDIKAEDFELLDYDPVKPQLKFDLAI.

133 to 134 serves as a coordination point for dUMP; sequence RR. Cys154 functions as the Nucleophile in the catalytic mechanism. Residues 178–181, Asn189, and 219–221 contribute to the dUMP site; these read RSND and HIY. Residue Asp181 participates in (6R)-5,10-methylene-5,6,7,8-tetrahydrofolate binding. (6R)-5,10-methylene-5,6,7,8-tetrahydrofolate is bound at residue Ala278.

Belongs to the thymidylate synthase family. Bacterial-type ThyA subfamily. Homodimer.

It localises to the cytoplasm. The catalysed reaction is dUMP + (6R)-5,10-methylene-5,6,7,8-tetrahydrofolate = 7,8-dihydrofolate + dTMP. It participates in pyrimidine metabolism; dTTP biosynthesis. Functionally, catalyzes the reductive methylation of 2'-deoxyuridine-5'-monophosphate (dUMP) to 2'-deoxythymidine-5'-monophosphate (dTMP) while utilizing 5,10-methylenetetrahydrofolate (mTHF) as the methyl donor and reductant in the reaction, yielding dihydrofolate (DHF) as a by-product. This enzymatic reaction provides an intracellular de novo source of dTMP, an essential precursor for DNA biosynthesis. This Streptococcus gordonii (strain Challis / ATCC 35105 / BCRC 15272 / CH1 / DL1 / V288) protein is Thymidylate synthase.